Here is an 89-residue protein sequence, read N- to C-terminus: MTSVNNNMTSRRNLVLREIKRQILWAWTDPKSYRMSVGAIHALRTAFECYMNIIMTDCAIMAAHGKRKTITDRDIAFHQYIKPFYLPRY.

It belongs to the histone H3 family.

This Dictyostelium discoideum (Social amoeba) protein is Histone H3.v2 (H3v2).